Here is a 137-residue protein sequence, read N- to C-terminus: Putative pre-16S rRNA nuclease (137 aa).

Belongs to the YqgF nuclease family.

Its subcellular location is the cytoplasm. Could be a nuclease involved in processing of the 5'-end of pre-16S rRNA. This Oceanobacillus iheyensis (strain DSM 14371 / CIP 107618 / JCM 11309 / KCTC 3954 / HTE831) protein is Putative pre-16S rRNA nuclease.